Consider the following 356-residue polypeptide: Protein HEXIM1 (356 aa).

2 stretches are compositionally biased toward basic and acidic residues: residues 1 to 11 (MAEPLLSEHQH) and 24 to 47 (VHEEQNSERPPSAEERVPKEDSRW). Residues 1–160 (MAEPLLSEHQ…RRRPSKKKRH (160 aa)) are disordered. The segment covering 48–58 (QSRASLQSGSR) has biased composition (polar residues). Positions 84–93 (CLEKGEKGQN) are enriched in basic and acidic residues. 2 positions are modified to phosphoserine: S98 and S103. Basic residues predominate over residues 145–160 (LGKKKHRRRPSKKKRH). The tract at residues 147–174 (KKKHRRRPSKKKRHWKPYYKLTWEEKKK) is basic region; mediates nuclear localization and interaction with 7SK snRNA and NR3C1. An interaction with P-TEFb region spans residues 199–202 (PYNT). Residues 207–247 (MDDHDQEEPDLKTGLYPKRAAAKSDDTSDEDFVEEAGEEDG) form an autoinhibitory acidic region; in absence of 7SK snRNA interacts with the basic region preventing interaction with P-TEFb and modulating subcellular localization region. Positions 209-259 (DHDQEEPDLKTGLYPKRAAAKSDDTSDEDFVEEAGEEDGGSDGMGGDGSEF) are disordered. Residue S230 is modified to Phosphoserine. Phosphothreonine is present on T233. Acidic residues predominate over residues 233 to 248 (TSDEDFVEEAGEEDGG). S234, S249, and S257 each carry phosphoserine. Residues 280-346 (SKQELIKEYL…LTENELHRQQ (67 aa)) are a coiled coil. Residues 283–311 (ELIKEYLELEKCLSRKEDENNRLRLESKR) are mediates interaction with CCNT1. The tract at residues 307 to 352 (LESKRLGGVDARVRELELELDRLRAENRQLLTENELHRQQERAPPS) is required for inhibition of ESR1-dependent transcription. A disordered region spans residues 337–356 (LTENELHRQQERAPPSKFGD).

This sequence belongs to the HEXIM family. In terms of assembly, homooligomer and heterooligomer with HEXIM2; probably dimeric. Core component of the 7SK RNP complex, at least composed of 7SK RNA, LARP7, MEPCE, HEXIM1 (or HEXIM2) and P-TEFb (composed of CDK9 and CCNT1/cyclin-T1). Interacts with the N-CoR complex through NCOR1. Interacts with ESR1 and NR3C1. May interact with NF-kappa-B through RELA. Interacts with CCNT2; mediates formation of a tripartite complex with KPNA2. Part of the HDP-RNP complex composed of at least HEXIM1, PRKDC, XRCC5, XRCC6, paraspeckle proteins (SFPQ, NONO, PSPC1, RBM14, and MATR3) and NEAT1 non-coding RNA.

It localises to the nucleus. The protein localises to the cytoplasm. Functionally, transcriptional regulator which functions as a general RNA polymerase II transcription inhibitor. Core component of the 7SK RNP complex: in cooperation with 7SK snRNA sequesters P-TEFb in a large inactive 7SK snRNP complex preventing RNA polymerase II phosphorylation and subsequent transcriptional elongation. May also regulate NF-kappa-B, ESR1, NR3C1 and CIITA-dependent transcriptional activity. Plays a role in the regulation of DNA virus-mediated innate immune response by assembling into the HDP-RNP complex, a complex that serves as a platform for IRF3 phosphorylation and subsequent innate immune response activation through the cGAS-STING pathway. This chain is Protein HEXIM1 (Hexim1), found in Rattus norvegicus (Rat).